Reading from the N-terminus, the 111-residue chain is Ribonuclease P protein component (111 aa).

It belongs to the RnpA family. In terms of assembly, consists of a catalytic RNA component (M1 or rnpB) and a protein subunit.

It carries out the reaction Endonucleolytic cleavage of RNA, removing 5'-extranucleotides from tRNA precursor.. In terms of biological role, RNaseP catalyzes the removal of the 5'-leader sequence from pre-tRNA to produce the mature 5'-terminus. It can also cleave other RNA substrates such as 4.5S RNA. The protein component plays an auxiliary but essential role in vivo by binding to the 5'-leader sequence and broadening the substrate specificity of the ribozyme. This Borrelia garinii subsp. bavariensis (strain ATCC BAA-2496 / DSM 23469 / PBi) (Borreliella bavariensis) protein is Ribonuclease P protein component.